A 160-amino-acid chain; its full sequence is Cytochrome b6-f complex subunit 4 (160 aa).

3 helical membrane passes run 36–56 (LLYV…ALAV), 95–115 (LLGV…PFIE), and 131–151 (TVFL…ALPL).

The protein belongs to the cytochrome b family. PetD subfamily. In terms of assembly, the 4 large subunits of the cytochrome b6-f complex are cytochrome b6, subunit IV (17 kDa polypeptide, PetD), cytochrome f and the Rieske protein, while the 4 small subunits are PetG, PetL, PetM and PetN. The complex functions as a dimer.

The protein localises to the cellular thylakoid membrane. Component of the cytochrome b6-f complex, which mediates electron transfer between photosystem II (PSII) and photosystem I (PSI), cyclic electron flow around PSI, and state transitions. This chain is Cytochrome b6-f complex subunit 4, found in Desmonostoc sp. (strain PCC 7906) (Nostoc sp. (strain PCC 7906)).